The primary structure comprises 27 residues: Peptide Cn29 (27 aa).

3 disulfides stabilise this stretch: Cys-2–Cys-23, Cys-5–Cys-18, and Cys-12–Cys-25.

In terms of tissue distribution, expressed by the venom gland.

The protein localises to the secreted. The protein is Peptide Cn29 of Centruroides noxius (Mexican scorpion).